Consider the following 301-residue polypeptide: 4-hydroxy-tetrahydrodipicolinate synthase (301 aa).

Threonine 46 serves as a coordination point for pyruvate. The Proton donor/acceptor role is filled by tyrosine 134. Lysine 162 (schiff-base intermediate with substrate) is an active-site residue. Position 203 (isoleucine 203) interacts with pyruvate.

This sequence belongs to the DapA family. Homotetramer; dimer of dimers.

It is found in the cytoplasm. The catalysed reaction is L-aspartate 4-semialdehyde + pyruvate = (2S,4S)-4-hydroxy-2,3,4,5-tetrahydrodipicolinate + H2O + H(+). It functions in the pathway amino-acid biosynthesis; L-lysine biosynthesis via DAP pathway; (S)-tetrahydrodipicolinate from L-aspartate: step 3/4. Functionally, catalyzes the condensation of (S)-aspartate-beta-semialdehyde [(S)-ASA] and pyruvate to 4-hydroxy-tetrahydrodipicolinate (HTPA). The polypeptide is 4-hydroxy-tetrahydrodipicolinate synthase (Anaplasma marginale (strain Florida)).